Consider the following 487-residue polypeptide: MSQLNKWQKELQALQKANYQETDNQLFNVYRQSLIDIKKRLKVYTENAESLSFSTRLEVERLFSVADEINAILQLNSPKVEKTIKGYSAKQAEQGYYGLWYTLEQSQNIALSMPLINHDYIMNLVNAPVAGKRLSKRLYKYRDELAQNVTNNIITGLFEGKSYAEIARWINEETEASYKQALRIARTEAGRTQSVTTQKGYEEAKELGINIKKKWLATIDKHTRRTHQELDGKEVDVDEEFTIRGHSAKGPRMFGVASEDVNCRCTTIEVVDGISPELRKDNESKEMSEFKSYDEWYADRIRQNESKPKPNFTELDFFGQSDLQDDSDKWVAGLKPEQVNAMKDYTSDAFAKMNKILRNEKYNPREKPYLVNIIQNLDDAISKFKLKHDIITYRGVSANEYDAILNGNVFKEFKSTSINKKVAEDFLNFTSANKDGRVVKFLIPKGTQGAYIGTNSSMKKESEFLLNRNLKYTVEIVDNILEVTILG.

The stretch at 2-51 forms a coiled coil; it reads SQLNKWQKELQALQKANYQETDNQLFNVYRQSLIDIKKRLKVYTENAESL. The TR mART core domain occupies 315–487; the sequence is LDFFGQSDLQ…DNILEVTILG (173 aa). Residues 346 to 358 and 394 to 400 contribute to the NAD(+) site; these read TSDA…KILR and RGVSANE. Catalysis depends on residues Arg-394, Ser-415, and Glu-463. Glu-463 is a binding site for NAD(+).

The protein localises to the secreted. The catalysed reaction is L-arginyl-[protein] + NAD(+) = N(omega)-(ADP-D-ribosyl)-L-arginyl-[protein] + nicotinamide + H(+). Functionally, a probable mono(ADP-ribosyl)transferase, it may ADP-ribosylate Arg in target protein(s). Upon expression in yeast cells causes cell death. The protein is NAD(+)--arginine ADP-ribosyltransferase EFV of Enterococcus faecalis (strain ATCC 700802 / V583).